The sequence spans 842 residues: MVSESCSRNYNHPYTPYDIQIQLMDAIYNTIENGYKIGLFESPTGTGKTLSIICSSMTWLRTFKRNNTFLETNNEVEDVYESESEEDEPEWVKKAYQSSIVNRSKNKLIEYEHYLDKIEKEHAQNKRKEEELEIKVHKRRKAMTAAGTDLSEESYLPMDYYSDSEVGKIEDQNLAITKEINRLLKKVENKEEVSYINECPIKIFFSSRTHSQLNQFSSQLRLTNFQASFEDLEERTKYIPLGSRKQLCINEKVRSKGNDQSVNDACLDLQRETNGCQYLPKNYMMSSVTKEFADLSLAKIRDIEDLNELGIELNICPYYSVRKGIEMTEIISLPYQMIFQDTTRKILNLDIKDSIIIIDEAHNIIDVITSMYSIKITSDQLNKVIKSLKIYLNKFLKRLNSGNRINLMKLIKICQILLKFLNTNSEKVKSGDEVQIQDIFKDSTGDLVNIHKLDQFLTKSKIAYKIESYIEKTEMETDNGEKKGRITNSGGSSSSSSSSNPLLFTIIKFLRTLTNLSKEGKFFWDNENGTISLNYMLLDPSAVFKEIVDQAKCVLLCGGTMEPMSDYMDYLFPSVPTNKINTFACGHVIPKENLQVFPISQWNDTNFEFSYQKRNDSKQLMALGEFLIEITKRVPYGVVIFFPSYKYLDQVLQFWRDTKILTSIESEKTIFREPKDPSNVEKVLNEYGYLIQTERKGAILFSVVGGKMSEGINFSDDLARAVIMVGLPYPNAYSGEMVTKRKYIETSELSNGGTTTDAKEKSRNYYENLCMRAVNQSIGRSIRHINDYSIIYLVDRRFSTPRIQNKLSQWVKERISITTTNNNNNNSIYIMESTTDFFNIIR.

One can recognise a Helicase ATP-binding domain in the interval 6 to 417 (CSRNYNHPYT…MKLIKICQIL (412 aa)). Residue 42 to 49 (SPTGTGKT) coordinates ATP. Residues Cys-248, Cys-266, Cys-276, and Cys-316 each contribute to the [4Fe-4S] cluster site. A DEAH box motif is present at residues 359–362 (DEAH). A disordered region spans residues 476–499 (ETDNGEKKGRITNSGGSSSSSSSS). Residues 489 to 499 (SGGSSSSSSSS) show a composition bias toward low complexity.

The protein belongs to the DEAD box helicase family. DEAH subfamily. DDX11/CHL1 sub-subfamily. It depends on [4Fe-4S] cluster as a cofactor.

Its subcellular location is the nucleus. The catalysed reaction is Couples ATP hydrolysis with the unwinding of duplex DNA at the replication fork by translocating in the 5'-3' direction. This creates two antiparallel DNA single strands (ssDNA). The leading ssDNA polymer is the template for DNA polymerase III holoenzyme which synthesizes a continuous strand.. The enzyme catalyses ATP + H2O = ADP + phosphate + H(+). ATP-dependent DNA helicase important for chromosome transmission and normal cell cycle progression in G(2)/M. May have a role in changing DNA topology to allow the loading of proteins involved in maintaining sister chromatid cohesion in the vicinity of the centromeres. Has a specific role in chromosome segregation during meiosis II. The polypeptide is ATP-dependent DNA helicase CHL1 (CHL1) (Candida albicans (strain SC5314 / ATCC MYA-2876) (Yeast)).